The primary structure comprises 180 residues: ATP-dependent protease subunit HslV (180 aa).

T7 is a catalytic residue. G165, C168, and T171 together coordinate Na(+).

This sequence belongs to the peptidase T1B family. HslV subfamily. As to quaternary structure, a double ring-shaped homohexamer of HslV is capped on each side by a ring-shaped HslU homohexamer. The assembly of the HslU/HslV complex is dependent on binding of ATP.

It is found in the cytoplasm. The catalysed reaction is ATP-dependent cleavage of peptide bonds with broad specificity.. With respect to regulation, allosterically activated by HslU binding. Functionally, protease subunit of a proteasome-like degradation complex believed to be a general protein degrading machinery. This chain is ATP-dependent protease subunit HslV, found in Bacillus cereus (strain Q1).